The primary structure comprises 221 residues: UPF0758 protein PC1_4100 (221 aa).

Positions 99–221 (AMLNPQATGQ…YVSFAERGWI (123 aa)) constitute an MPN domain. 3 residues coordinate Zn(2+): histidine 170, histidine 172, and aspartate 183. The JAMM motif signature appears at 170 to 183 (HNHPSGKAEPSQAD).

It belongs to the UPF0758 family. YicR subfamily.

This is UPF0758 protein PC1_4100 from Pectobacterium carotovorum subsp. carotovorum (strain PC1).